A 212-amino-acid chain; its full sequence is Maleylpyruvate isomerase (212 aa).

In terms of domain architecture, GST N-terminal spans 1 to 80 (MKLYNFWRSG…WLEEQYPTPA (80 aa)). Residues 9-11 (SGT), His-38, Val-52, 64-65 (QS), 102-104 (DIH), 108-110 (NRR), and Arg-176 contribute to the glutathione site. The region spanning 85–212 (DADGRQRVRA…AAPAAQPDSA (128 aa)) is the GST C-terminal domain.

It belongs to the GST superfamily. Zeta family. As to quaternary structure, homodimer. Requires glutathione as cofactor.

The enzyme catalyses 3-maleylpyruvate = 3-fumarylpyruvate. It functions in the pathway aromatic compound metabolism; naphthalene degradation. Catalyzes the GSH-dependent isomerization of maleylpyruvate to fumarylpyruvate which is subsequently processed by NagK to form pyruvate and fumarate. The polypeptide is Maleylpyruvate isomerase (Ralstonia sp).